Reading from the N-terminus, the 872-residue chain is MKSIHGFLLFLITAYVILESVQAQDQLGFISLDCGLVPKNATYTEKTTNITYKSDANYIDSGLVGRISAEYKAQLQQQTWTVRSFPEGERNCYNFNLTAKSRYLIRATFTYGNYDGLRQVPKFDIHIGPSKWTSVKLDGVGNGAVLEMIHVLTQDRLQICLVKTGKGIPFISSLELRPLNNNTYLTQSGSLIGFARVFFSATPTFIRYDEDIHDRVWVRQFGNGLKSISTDLLVDTSNPYDVPQAVAKTACVPSNASQPLIFDWTLDNITSQSYVYMHFAEIQTLKDNDIREFNITYNGGQNVYSYLRPEKFEISTLFDSKPLSSPDGSFSLSFTKTGNSTLPPLINGLEIYKVLDLLELETDQDEVSAMINIKATYDLSKKVSWQGDPCAPKSYQWEGLNCSYPNSDQPRIISLNLAENKLTGTITPEISKLTQLIELDLSKNDLSGEIPEFFADMKLLKLINLSGNLGLNSTIPDSIQQRLDSKSLILILSKTVTKTVTLKGKSKKVPMIPIVASVAGVFALLVILAIFFVVRRKNGESNKGTNPSIITKERRITYPEVLKMTNNFERVLGKGGFGTVYHGNLEDTQVAVKMLSHSSAQGYKEFKAEVELLLRVHHRNLVGLVGYCDDGDNLALIYEYMANGDLKENMSGKRGGNVLTWENRMQIAVEAAQGLEYLHNGCTPPMVHRDVKTTNILLNERYGAKLADFGLSRSFPVDGESHVSTVVAGTPGYLDPEYYRTNWLSEKSDVYSFGVVLLEIVTNQPVTDKTRERTHINEWVGSMLTKGDIKSILDPKLMGDYDTNGAWKIVELALACVNPSSNRRPTMAHVVTELNECVALENARRQGREEMHTSGYVDFSRSSASEFSPGAR.

The N-terminal stretch at 1 to 23 is a signal peptide; the sequence is MKSIHGFLLFLITAYVILESVQA. Topologically, residues 24-513 are extracellular; it reads QDQLGFISLD…GKSKKVPMIP (490 aa). Asn-40, Asn-49, Asn-96, Asn-181, Asn-255, Asn-268, Asn-294, Asn-339, and Asn-401 each carry an N-linked (GlcNAc...) asparagine glycan. LRR repeat units lie at residues 411–434, 435–457, and 459–482; these read RIIS…SKLT, QLIE…FADM, and LLKL…IQQR. N-linked (GlcNAc...) asparagine glycosylation is found at Asn-464 and Asn-472. A helical transmembrane segment spans residues 514–534; it reads IVASVAGVFALLVILAIFFVV. At 535–872 the chain is on the cytoplasmic side; that stretch reads RRKNGESNKG…SASEFSPGAR (338 aa). Position 557 is a phosphothreonine (Thr-557). Positions 566–838 constitute a Protein kinase domain; that stretch reads NNFERVLGKG…HVVTELNECV (273 aa). ATP contacts are provided by residues 572-580 and Lys-593; that span reads LGKGGFGTV. Tyr-638 carries the post-translational modification Phosphotyrosine. Asp-690 functions as the Proton acceptor in the catalytic mechanism. Ser-724 bears the Phosphoserine mark. Phosphothreonine occurs at positions 725 and 730. Tyr-738 is subject to Phosphotyrosine.

This sequence belongs to the protein kinase superfamily. Ser/Thr protein kinase family.

Its subcellular location is the membrane. The catalysed reaction is L-seryl-[protein] + ATP = O-phospho-L-seryl-[protein] + ADP + H(+). It carries out the reaction L-threonyl-[protein] + ATP = O-phospho-L-threonyl-[protein] + ADP + H(+). The chain is Probable LRR receptor-like serine/threonine-protein kinase At1g51880 from Arabidopsis thaliana (Mouse-ear cress).